Consider the following 443-residue polypeptide: tRNA(Ile2) 2-agmatinylcytidine synthetase TiaS (443 aa).

Belongs to the TiaS family.

It localises to the cytoplasm. It carries out the reaction cytidine(34) in tRNA(Ile2) + agmatine + ATP + H2O = 2-agmatinylcytidine(34) in tRNA(Ile2) + AMP + 2 phosphate + 2 H(+). In terms of biological role, ATP-dependent agmatine transferase that catalyzes the formation of 2-agmatinylcytidine (agm2C) at the wobble position (C34) of tRNA(Ile2), converting the codon specificity from AUG to AUA. The protein is tRNA(Ile2) 2-agmatinylcytidine synthetase TiaS of Saccharolobus islandicus (strain L.S.2.15 / Lassen #1) (Sulfolobus islandicus).